The chain runs to 448 residues: Phosphoglucosamine mutase (448 aa).

Ser-100 acts as the Phosphoserine intermediate in catalysis. Positions 100, 240, 242, and 244 each coordinate Mg(2+). At Ser-100 the chain carries Phosphoserine.

This sequence belongs to the phosphohexose mutase family. Requires Mg(2+) as cofactor. Activated by phosphorylation.

It catalyses the reaction alpha-D-glucosamine 1-phosphate = D-glucosamine 6-phosphate. Its function is as follows. Catalyzes the conversion of glucosamine-6-phosphate to glucosamine-1-phosphate. The sequence is that of Phosphoglucosamine mutase from Clostridium perfringens (strain SM101 / Type A).